The chain runs to 360 residues: DNA replication and repair protein RecF (360 aa).

30–37 (GHNGSGKT) serves as a coordination point for ATP.

It belongs to the RecF family.

The protein localises to the cytoplasm. Its function is as follows. The RecF protein is involved in DNA metabolism; it is required for DNA replication and normal SOS inducibility. RecF binds preferentially to single-stranded, linear DNA. It also seems to bind ATP. The sequence is that of DNA replication and repair protein RecF from Shewanella denitrificans (strain OS217 / ATCC BAA-1090 / DSM 15013).